The primary structure comprises 466 residues: Delta-1 crystallin (466 aa).

Belongs to the lyase 1 family. Argininosuccinate lyase subfamily. As to quaternary structure, homotetramer. In terms of tissue distribution, eye lens.

Its function is as follows. Delta crystallin, the principal crystallin in embryonic lens, is found only in birds and reptiles. Despite possessing the necessary catalytic residues, this protein does not function as an enzymatically active argininosuccinate lyase. This chain is Delta-1 crystallin (ASL1), found in Anas platyrhynchos (Mallard).